The sequence spans 534 residues: Peptide chain release factor 3 (534 aa).

Residues 9–278 form the tr-type G domain; that stretch reads ARRRTFAIIS…FFVEHAPSPQ (270 aa). Residues 18 to 25, 86 to 90, and 140 to 143 each bind GTP; these read SHPDAGKT, DTPGH, and NKLD.

Belongs to the TRAFAC class translation factor GTPase superfamily. Classic translation factor GTPase family. PrfC subfamily.

It is found in the cytoplasm. Increases the formation of ribosomal termination complexes and stimulates activities of RF-1 and RF-2. It binds guanine nucleotides and has strong preference for UGA stop codons. It may interact directly with the ribosome. The stimulation of RF-1 and RF-2 is significantly reduced by GTP and GDP, but not by GMP. The protein is Peptide chain release factor 3 of Xylella fastidiosa (strain M23).